Here is a 329-residue protein sequence, read N- to C-terminus: Peroxidase 5 (329 aa).

Positions 1 to 26 (MSSKRVTWLSLTWVLVFLCLSVELEA) are cleaved as a signal peptide. Pyrrolidone carboxylic acid is present on Q27. 4 cysteine pairs are disulfide-bonded: C37/C117, C70/C75, C123/C324, and C202/C234. The active-site Proton acceptor is the H68. Residues D69, V72, G74, D76, and S78 each coordinate Ca(2+). P165 lines the substrate pocket. H195 is a heme b binding site. A Ca(2+)-binding site is contributed by T196. Residue N213 is glycosylated (N-linked (GlcNAc...) asparagine). Residues S251 and D256 each contribute to the Ca(2+) site.

It belongs to the peroxidase family. Classical plant (class III) peroxidase subfamily. Heme b serves as cofactor. The cofactor is Ca(2+).

The protein localises to the secreted. It carries out the reaction 2 a phenolic donor + H2O2 = 2 a phenolic radical donor + 2 H2O. Its function is as follows. Removal of H(2)O(2), oxidation of toxic reductants, biosynthesis and degradation of lignin, suberization, auxin catabolism, response to environmental stresses such as wounding, pathogen attack and oxidative stress. These functions might be dependent on each isozyme/isoform in each plant tissue. This is Peroxidase 5 from Vitis vinifera (Grape).